The following is a 570-amino-acid chain: Phosphoglucomutase 1 (570 aa).

The residue at position 2 (S2) is an N-acetylserine. Alpha-D-glucose 1,6-bisphosphate-binding residues include R24 and S120. The active-site Phosphoserine intermediate is S120. 4 residues coordinate Mg(2+): S120, D291, D293, and D295. S120 carries the phosphoserine modification. 6 residues coordinate alpha-D-glucose 1,6-bisphosphate: D295, R296, T360, E379, S381, and K392.

The protein belongs to the phosphohexose mutase family. As to quaternary structure, monomer. The cofactor is Mg(2+).

It is found in the cytoplasm. It catalyses the reaction alpha-D-glucose 1-phosphate = alpha-D-glucose 6-phosphate. It carries out the reaction O-phospho-L-seryl-[protein] + alpha-D-glucose 1-phosphate = alpha-D-glucose 1,6-bisphosphate + L-seryl-[protein]. The enzyme catalyses alpha-D-glucose 1,6-bisphosphate + L-seryl-[protein] = O-phospho-L-seryl-[protein] + alpha-D-glucose 6-phosphate. Its function is as follows. Minor phosphoglucomutase isozyme that catalyzes the reversible interconversion of alpha-D-glucose 1-phosphate and alpha-D-glucose 6-phosphate. The mechanism proceeds via the intermediate compound alpha-D-glucose 1,6-bisphosphate. Constitutes about 10-20% of the phosphoglucomutase activity in the cell. Key enzyme in hexose metabolism. The forward reaction is an essential step in the energy metabolism of galactose since the product of the galactose pathway enzymes in yeast is glucose 1-phosphate. The reverse reaction is an essential step for biosynthesis when carbon sources other than galactose are the energy source because glucose 1-phosphate is the starting point for the synthesis of UDP-glucose, which acts as a precursor for the synthesis of oligosaccharides and trehalose. This chain is Phosphoglucomutase 1, found in Saccharomyces cerevisiae (strain ATCC 204508 / S288c) (Baker's yeast).